Reading from the N-terminus, the 312-residue chain is Ribose-phosphate pyrophosphokinase (312 aa).

Residues Asp-34–Glu-36 and Arg-93–Gln-94 each bind ATP. Mg(2+)-binding residues include His-127 and Asp-168. Lys-192 is a catalytic residue. D-ribose 5-phosphate contacts are provided by residues Arg-194, Asp-218, and Asp-222 to Thr-226.

The protein belongs to the ribose-phosphate pyrophosphokinase family. Class I subfamily. Homohexamer. Requires Mg(2+) as cofactor.

It is found in the cytoplasm. It carries out the reaction D-ribose 5-phosphate + ATP = 5-phospho-alpha-D-ribose 1-diphosphate + AMP + H(+). It participates in metabolic intermediate biosynthesis; 5-phospho-alpha-D-ribose 1-diphosphate biosynthesis; 5-phospho-alpha-D-ribose 1-diphosphate from D-ribose 5-phosphate (route I): step 1/1. Its function is as follows. Involved in the biosynthesis of the central metabolite phospho-alpha-D-ribosyl-1-pyrophosphate (PRPP) via the transfer of pyrophosphoryl group from ATP to 1-hydroxyl of ribose-5-phosphate (Rib-5-P). In Caulobacter vibrioides (strain ATCC 19089 / CIP 103742 / CB 15) (Caulobacter crescentus), this protein is Ribose-phosphate pyrophosphokinase.